The chain runs to 308 residues: Ribosomal RNA large subunit methyltransferase F (308 aa).

It belongs to the methyltransferase superfamily. METTL16/RlmF family.

Its subcellular location is the cytoplasm. The enzyme catalyses adenosine(1618) in 23S rRNA + S-adenosyl-L-methionine = N(6)-methyladenosine(1618) in 23S rRNA + S-adenosyl-L-homocysteine + H(+). Functionally, specifically methylates the adenine in position 1618 of 23S rRNA. This Salmonella dublin (strain CT_02021853) protein is Ribosomal RNA large subunit methyltransferase F.